The chain runs to 663 residues: Polyunsaturated fatty acid lipoxygenase ALOX15 (663 aa).

Positions 2-115 (GLYRVRVSTG…ILSLPEGTAR (114 aa)) constitute a PLAT domain. The 548-residue stretch at 116 to 663 (TVVDDPQGLF…PSRVENSVAI (548 aa)) folds into the Lipoxygenase domain. Fe cation contacts are provided by histidine 361, histidine 366, histidine 541, histidine 545, and isoleucine 663.

It belongs to the lipoxygenase family. As to quaternary structure, interacts with PEBP1; in response to IL13/interleukin-13, prevents the interaction of PEBP1 with RAF1 to activate the ERK signaling cascade. Requires Fe cation as cofactor.

The protein resides in the cytoplasm. It localises to the cytosol. Its subcellular location is the cell membrane. It is found in the lipid droplet. The catalysed reaction is (5Z,8Z,11Z,14Z)-eicosatetraenoate + O2 = (12S)-hydroperoxy-(5Z,8Z,10E,14Z)-eicosatetraenoate. It catalyses the reaction (5Z,8Z,11Z,14Z)-eicosatetraenoate + O2 = (15S)-hydroperoxy-(5Z,8Z,11Z,13E)-eicosatetraenoate. The enzyme catalyses (9Z,12Z)-octadecadienoate + O2 = (13S)-hydroperoxy-(9Z,11E)-octadecadienoate. It carries out the reaction (5Z,8Z,11Z,14Z)-eicosatetraenoate + 2 O2 = (14R,15S)-dihydroperoxy-(5Z,8Z,10E,12E)-eicosatetraenoate. The catalysed reaction is (5Z,8Z,11Z,14Z)-eicosatetraenoate + 2 O2 = (8S,15S)-dihydroperoxy-(5Z,9E,11Z,13E)-eicosatetraenoate. It catalyses the reaction (14S,15R)-epoxy-(5Z,8Z,11Z)-eicosatrienoate + O2 = (8S)-hydroperoxy-(14S,15R)-epoxy-(5Z,9E,11Z)-eicosatrienoate. The enzyme catalyses (14S,15R)-epoxy-(5Z,8Z,11Z)-eicosatrienoate + O2 = (12S)-hydroperoxy-(14S,15R)-epoxy-(5Z,8Z,10E)-eicosatrienoate. It carries out the reaction (14R,15S)-epoxy-(5Z,8Z,11Z)-eicosatrienoate + O2 = (5S)-hydroperoxy-(14R,15S)-epoxy-(6E,8Z,11Z)-eicosatrienoate. The catalysed reaction is (14R,15S)-epoxy-(5Z,8Z,11Z)-eicosatrienoate + O2 = (12S)-hydroperoxy-(14R,15S)-epoxy-(5Z,8Z,10E)-eicosatrienoate. It catalyses the reaction (15R)-hydroperoxy-(5Z,8Z,11Z,13E)-eicosatetraenoate = 15-oxo-(5Z,8Z,11Z,13E)-eicosatetraenoate + H2O. The enzyme catalyses (15S)-hydroperoxy-(5Z,8Z,11Z,13E)-eicosatetraenoate = (14S,15S)-epoxy-(5Z,8Z,10E,12E)-eicosatetraenoate + H2O. It carries out the reaction (12S)-hydroperoxy-(5Z,8Z,10E,14Z)-eicosatetraenoate = (8S)-hydroxy-(11S,12S)-epoxy-(5Z,9E,14Z)-eicosatrienoate. The catalysed reaction is (4Z,7Z,10Z,13Z,16Z,19Z)-docosahexaenoate + O2 = 14-hydroperoxy-(4Z,7Z,10Z,12E,16Z,19Z)-docosahexaenoate. It catalyses the reaction (4Z,7Z,10Z,13Z,16Z)-docosapentaenoate + O2 = 14-hydroperoxy-(4Z,7Z,10Z,12E,16Z)-docosapentaenoate. The enzyme catalyses (7Z,10Z,13Z,16Z,19Z)-docosapentaenoate + O2 = 14-hydroperoxy-(7Z,10Z,12E,16Z,19Z)-docosapentaenoate. It carries out the reaction (4Z,7Z,10Z,13Z,16Z,19Z)-docosahexaenoate + O2 = (14S)-hydroperoxy-(4Z,7Z,10Z,12E,16Z,19Z)-docosahexaenoate. The catalysed reaction is (4Z,7Z,10Z,13Z,16Z,19Z)-docosahexaenoate + O2 = (17S)-hydroperoxy-(4Z,7Z,10Z,13Z,15E,19Z)-docosahexaenoate. It catalyses the reaction (7S)-hydroperoxy-(4Z,8E,10Z,13Z,16Z,19Z)-docosahexaenoate + O2 = (7S,14S)-dihydroperoxy-(4Z,8E,10Z,12E,16Z,19Z)-docosahexaenoate. The enzyme catalyses (7S)-hydroperoxy-(4Z,8E,10Z,13Z,16Z,19Z)-docosahexaenoate + O2 = (7S,17S)-dihydroperoxy-(4Z,8E,10Z,13Z,15E,19Z)-docosahexaenoate. It carries out the reaction (4Z,7Z,10Z,13Z,16Z,19Z)-docosahexaenoate + O2 = (11S)-hydroperoxy-(4Z,7Z,9E,13Z,16Z,19Z)-docosahexaenoate. The catalysed reaction is N-(5Z,8Z,11Z,14Z)-eicosatetraenoyl-taurine + O2 = N-(12S)-hydroperoxy-(5Z,8Z,10E,14Z)-eicosatetraenoyl-taurine. It catalyses the reaction N-(5Z,8Z,11Z,14Z)-eicosatetraenoyl-gamma-aminobutanoate + O2 = N-(12S)-hydroperoxy-(5Z,8Z,10E,14Z)-eicosatetraenoyl-gamma-aminobutanoate. The enzyme catalyses N-(5Z,8Z,11Z,14Z)-eicosatetraenoyl-glycine + O2 = N-(12S)-hydroperoxy-(5Z,8Z,10E,14Z)-eicosatetraenoyl-glycine. It carries out the reaction N-(5Z,8Z,11Z,14Z)-eicosatetraenoyl-L-alanine + O2 = N-(12S)-hydroperoxy-(5Z,8Z,10E,14Z)-eicosatetraenoyl-alanine. The catalysed reaction is N-(5Z,8Z,11Z,14Z)-eicosatetraenoyl-taurine + O2 = N-(15S)-hydroperoxy-(5Z,8Z,11Z,13E)-eicosatetraenoyl-taurine. It catalyses the reaction N-(5Z,8Z,11Z,14Z)-eicosatetraenoyl-gamma-aminobutanoate + O2 = N-(15S)-hydroperoxy-(5Z,8Z,11Z,13E)-eicosatetraenoyl-gamma-aminobutanoate. The enzyme catalyses N-(5Z,8Z,11Z,14Z)-eicosatetraenoyl-glycine + O2 = N-(15S)-hydroperoxy-(5Z,8Z,11Z,13E)-eicosatetraenoyl-glycine. It carries out the reaction N-(5Z,8Z,11Z,14Z)-eicosatetraenoyl-L-alanine + O2 = N-(15S)-hydroperoxy-(5Z,8Z,11Z,13E)-eicosatetraenoyl-alanine. It participates in lipid metabolism; hydroperoxy eicosatetraenoic acid biosynthesis. Non-heme iron-containing dioxygenase that catalyzes the stereo-specific peroxidation of free and esterified polyunsaturated fatty acids generating a spectrum of bioactive lipid mediators. It inserts peroxyl groups at C12 or C15 of arachidonate ((5Z,8Z,11Z,14Z)-eicosatetraenoate) producing both 12-hydroperoxyeicosatetraenoate/12-HPETE and 15-hydroperoxyeicosatetraenoate/15-HPETE. It may then act on 12-HPETE to produce hepoxilins, which may show pro-inflammatory properties. Can also peroxidize linoleate ((9Z,12Z)-octadecadienoate) to 13-hydroperoxyoctadecadienoate. May participate in the sequential oxidations of DHA ((4Z,7Z,10Z,13Z,16Z,19Z)-docosahexaenoate) to generate specialized pro-resolving mediators (SPMs)like resolvin D5 ((7S,17S)-diHPDHA) and (7S,14S)-diHPDHA, that actively down-regulate the immune response and have anti-aggregation properties with platelets. Can convert epoxy fatty acids to hydroperoxy-epoxides derivatives followed by an intramolecular nucleophilic substitution leading to the formation of monocyclic endoperoxides. Plays an important role during the maintenance of self-tolerance by peroxidizing membrane-bound phosphatidylethanolamine which can then signal the sorting process for clearance of apoptotic cells during inflammation and prevent an autoimmune response. In addition to its role in the immune and inflammatory responses, this enzyme may play a role in epithelial wound healing in the cornea through production of lipoxin A4 (LXA(4)) and docosahexaenoic acid-derived neuroprotectin D1 (NPD1; 10R,17S-HDHA), both lipid autacoids exhibit anti-inflammatory and neuroprotective properties. Furthermore, it may regulate actin polymerization which is crucial for several biological processes such as the phagocytosis of apoptotic cells. It is also implicated in the generation of endogenous ligands for peroxisome proliferator activated receptor (PPAR-gamma), hence modulating macrophage development and function. It may also exert a negative effect on skeletal development by regulating bone mass through this pathway. As well as participates in ER stress and downstream inflammation in adipocytes, pancreatic islets, and liver. Finally, it is also involved in the cellular response to IL13/interleukin-13. This chain is Polyunsaturated fatty acid lipoxygenase ALOX15, found in Sus scrofa (Pig).